Consider the following 827-residue polypeptide: Xanthomonalisin (827 aa).

An N-terminal signal peptide occupies residues 1–23; sequence MKIEKTALTVAIALAMSSLSAHA. A propeptide spans 24-237 (removed in mature form); it reads EDAWVSTHTQ…GPNVGTQAAA (214 aa). A Peptidase S53 domain is found at 241–625; the sequence is AHHPQDFAAI…GKLNTYAQAN (385 aa). Active-site charge relay system residues include glutamate 312, aspartate 316, and serine 544. Ca(2+) contacts are provided by aspartate 585, valine 586, alanine 601, glycine 603, and aspartate 605. The region spanning 635–722 is the PKD domain; that stretch reads TNAPPVANFS…VTVSSSGGTG (88 aa). A propeptide spans 636–827 (removed in mature form); the sequence is NAPPVANFSV…GVSLKATWTN (192 aa).

Ca(2+) serves as cofactor. Post-translationally, autocatalytically processed.

It localises to the secreted. The enzyme catalyses Cleavage of casein.. Inhibited by 1,2-epoxy-3-(p-nitrophenoxy)propane (EPNP), but not by pepstatin, pepstatin Ac (S-PI) and diazoacetyl-DL-norleucine methyl ester (DAN). Not inhibited by metal ions. Pepstatin-insensitive serine-carboxyl proteinase. Shows activity on acid-denatured hemoglobin and on casein. This chain is Xanthomonalisin, found in Xanthomonas sp. (strain T-22).